A 238-amino-acid chain; its full sequence is Xyloglucan-specific endo-beta-1,4-glucanase A (238 aa).

The signal sequence occupies residues 1-14 (MKLSLLSLATLASA).

Belongs to the glycosyl hydrolase 12 (cellulase H) family.

The protein resides in the secreted. The catalysed reaction is xyloglucan + H2O = xyloglucan oligosaccharides.. Functionally, catalyzes endohydrolysis of 1,4-beta-D-glucosidic linkages in xyloglucan with retention of the beta-configuration of the glycosyl residues. Specific for xyloglucan and does not hydrolyze other cell wall components. This Aspergillus aculeatus protein is Xyloglucan-specific endo-beta-1,4-glucanase A (xgeA).